The chain runs to 157 residues: Glutathione peroxidase (157 aa).

C35 is a catalytic residue.

Belongs to the glutathione peroxidase family.

It catalyses the reaction 2 glutathione + H2O2 = glutathione disulfide + 2 H2O. In Lactococcus lactis subsp. cremoris (strain MG1363), this protein is Glutathione peroxidase (gpo).